The chain runs to 261 residues: Indole-3-glycerol phosphate synthase (261 aa).

Belongs to the TrpC family.

It catalyses the reaction 1-(2-carboxyphenylamino)-1-deoxy-D-ribulose 5-phosphate + H(+) = (1S,2R)-1-C-(indol-3-yl)glycerol 3-phosphate + CO2 + H2O. Its pathway is amino-acid biosynthesis; L-tryptophan biosynthesis; L-tryptophan from chorismate: step 4/5. This Campylobacter curvus (strain 525.92) protein is Indole-3-glycerol phosphate synthase.